We begin with the raw amino-acid sequence, 153 residues long: Ribosome maturation factor RimP (153 aa).

The protein belongs to the RimP family.

Its subcellular location is the cytoplasm. In terms of biological role, required for maturation of 30S ribosomal subunits. In Clostridium botulinum (strain 657 / Type Ba4), this protein is Ribosome maturation factor RimP.